Here is a 229-residue protein sequence, read N- to C-terminus: Large ribosomal subunit protein uL1 (229 aa).

The protein belongs to the universal ribosomal protein uL1 family. Part of the 50S ribosomal subunit.

Binds directly to 23S rRNA. The L1 stalk is quite mobile in the ribosome, and is involved in E site tRNA release. In terms of biological role, protein L1 is also a translational repressor protein, it controls the translation of the L11 operon by binding to its mRNA. This Flavobacterium psychrophilum (strain ATCC 49511 / DSM 21280 / CIP 103535 / JIP02/86) protein is Large ribosomal subunit protein uL1.